The primary structure comprises 36 residues: Termicin (36 aa).

3 disulfides stabilise this stretch: Cys2–Cys24, Cys7–Cys29, and Cys11–Cys31. At Gly36 the chain carries Glycine amide.

As to expression, expressed in salivary glands and hemocytes.

It is found in the secreted. In terms of biological role, weak activity against Gram-positive bacteria B.megaterium, S.pyogenes and M.luteus, strong activity against yeasts C.albicans, C.neoformans and S.cerevisiae and filamentous fungi F.oxysporum, F.culmorum, N.crassa and N.hematococca. Less active against filamentous fungus T.viride. Inactive against Gram-positive bacteria A.viridans and S.aureus, filamentous fungi A.fumigatus and B.bassiana and yeast C.glabrata. This Pseudacanthotermes spiniger protein is Termicin.